We begin with the raw amino-acid sequence, 448 residues long: Phosphoglucosamine mutase (448 aa).

S102 serves as the catalytic Phosphoserine intermediate. Mg(2+) is bound by residues S102, D243, D245, and D247. A Phosphoserine modification is found at S102.

It belongs to the phosphohexose mutase family. It depends on Mg(2+) as a cofactor. Activated by phosphorylation.

The enzyme catalyses alpha-D-glucosamine 1-phosphate = D-glucosamine 6-phosphate. In terms of biological role, catalyzes the conversion of glucosamine-6-phosphate to glucosamine-1-phosphate. The sequence is that of Phosphoglucosamine mutase from Mycobacterium bovis (strain ATCC BAA-935 / AF2122/97).